We begin with the raw amino-acid sequence, 253 residues long: Phosphate import ATP-binding protein PstB (253 aa).

The 242-residue stretch at 7 to 248 (MHSKGLDFFY…PGNKQTEDYI (242 aa)) folds into the ABC transporter domain. 39–46 (GPSGCGKS) contributes to the ATP binding site.

This sequence belongs to the ABC transporter superfamily. Phosphate importer (TC 3.A.1.7) family. In terms of assembly, the complex is composed of two ATP-binding proteins (PstB), two transmembrane proteins (PstC and PstA) and a solute-binding protein (PstS).

It localises to the cell inner membrane. It catalyses the reaction phosphate(out) + ATP + H2O = ADP + 2 phosphate(in) + H(+). Its function is as follows. Part of the ABC transporter complex PstSACB involved in phosphate import. Responsible for energy coupling to the transport system. This Oleidesulfovibrio alaskensis (strain ATCC BAA-1058 / DSM 17464 / G20) (Desulfovibrio alaskensis) protein is Phosphate import ATP-binding protein PstB.